A 366-amino-acid chain; its full sequence is S-adenosylmethionine:tRNA ribosyltransferase-isomerase (366 aa).

The protein belongs to the QueA family. Monomer.

It localises to the cytoplasm. It catalyses the reaction 7-aminomethyl-7-carbaguanosine(34) in tRNA + S-adenosyl-L-methionine = epoxyqueuosine(34) in tRNA + adenine + L-methionine + 2 H(+). It participates in tRNA modification; tRNA-queuosine biosynthesis. In terms of biological role, transfers and isomerizes the ribose moiety from AdoMet to the 7-aminomethyl group of 7-deazaguanine (preQ1-tRNA) to give epoxyqueuosine (oQ-tRNA). This chain is S-adenosylmethionine:tRNA ribosyltransferase-isomerase, found in Methylorubrum populi (strain ATCC BAA-705 / NCIMB 13946 / BJ001) (Methylobacterium populi).